The chain runs to 295 residues: MITELHGIDIRENEPLKHYTYTKVGGPADFLAFPRNRYELSRIVAYANKENMPWLVLGNASNLIVRDGGIRGFVIMFDKLNAVHLNGYTLEAEAGANLIETTKIAKFHSLTGFEFACGIPGSIGGAVFMNAGAYGGEISHIFLSAKVLTSSGEIKTISARDMAFGYRHSAIQETGDIVISAKFALKPGNYDTISQEMNRLNHLRQLKQPLEFPSCGSVFKRPPGHFAGQLIMEANLKGHRIGGVEVSEKHAGFMINVADGTAKDYEDLIAYVIETVENHSGVRLEPEVRIIGENL.

The 166-residue stretch at 23–188 (KVGGPADFLA…ISAKFALKPG (166 aa)) folds into the FAD-binding PCMH-type domain. Residue arginine 167 is part of the active site. The active-site Proton donor is the serine 217. The active site involves glutamate 287.

The protein belongs to the MurB family. FAD is required as a cofactor.

The protein resides in the cytoplasm. It catalyses the reaction UDP-N-acetyl-alpha-D-muramate + NADP(+) = UDP-N-acetyl-3-O-(1-carboxyvinyl)-alpha-D-glucosamine + NADPH + H(+). It functions in the pathway cell wall biogenesis; peptidoglycan biosynthesis. In terms of biological role, cell wall formation. The protein is UDP-N-acetylenolpyruvoylglucosamine reductase of Streptococcus pyogenes serotype M49 (strain NZ131).